Reading from the N-terminus, the 178-residue chain is Interleukin-10 (178 aa).

The signal sequence occupies residues 1–18 (MHSSALLCYLVFLAGVGA). 2 disulfide bridges follow: cysteine 30–cysteine 126 and cysteine 80–cysteine 132. Asparagine 67 carries N-linked (GlcNAc...) asparagine glycosylation. A glycan (N-linked (GlcNAc...) asparagine) is linked at asparagine 134.

This sequence belongs to the IL-10 family. In terms of assembly, homodimer. Interacts with IL10RA and IL10RB.

It is found in the secreted. In terms of biological role, major immune regulatory cytokine that acts on many cells of the immune system where it has profound anti-inflammatory functions, limiting excessive tissue disruption caused by inflammation. Mechanistically, IL10 binds to its heterotetrameric receptor comprising IL10RA and IL10RB leading to JAK1 and STAT2-mediated phosphorylation of STAT3. In turn, STAT3 translocates to the nucleus where it drives expression of anti-inflammatory mediators. Targets antigen-presenting cells (APCs) such as macrophages and monocytes and inhibits their release of pro-inflammatory cytokines including granulocyte-macrophage colony-stimulating factor /GM-CSF, granulocyte colony-stimulating factor/G-CSF, IL-1 alpha, IL-1 beta, IL-6, IL-8 and TNF-alpha. Also interferes with antigen presentation by reducing the expression of MHC-class II and co-stimulatory molecules, thereby inhibiting their ability to induce T cell activation. In addition, controls the inflammatory response of macrophages by reprogramming essential metabolic pathways including mTOR signaling. The sequence is that of Interleukin-10 (IL10) from Equus caballus (Horse).